The chain runs to 245 residues: 1-(5-phosphoribosyl)-5-[(5-phosphoribosylamino)methylideneamino] imidazole-4-carboxamide isomerase (245 aa).

The active-site Proton acceptor is Asp11. The active-site Proton donor is the Asp132.

Belongs to the HisA/HisF family.

The protein resides in the cytoplasm. The catalysed reaction is 1-(5-phospho-beta-D-ribosyl)-5-[(5-phospho-beta-D-ribosylamino)methylideneamino]imidazole-4-carboxamide = 5-[(5-phospho-1-deoxy-D-ribulos-1-ylimino)methylamino]-1-(5-phospho-beta-D-ribosyl)imidazole-4-carboxamide. Its pathway is amino-acid biosynthesis; L-histidine biosynthesis; L-histidine from 5-phospho-alpha-D-ribose 1-diphosphate: step 4/9. This Xanthobacter autotrophicus (strain ATCC BAA-1158 / Py2) protein is 1-(5-phosphoribosyl)-5-[(5-phosphoribosylamino)methylideneamino] imidazole-4-carboxamide isomerase.